Reading from the N-terminus, the 101-residue chain is Small ribosomal subunit protein uS14 (101 aa).

Residues 1–20 form a disordered region; it reads MAKTSAVNRNKMRERMASRD. Basic and acidic residues predominate over residues 11–20; that stretch reads KMRERMASRD.

Belongs to the universal ribosomal protein uS14 family. Part of the 30S ribosomal subunit. Contacts proteins S3 and S10.

Functionally, binds 16S rRNA, required for the assembly of 30S particles and may also be responsible for determining the conformation of the 16S rRNA at the A site. The protein is Small ribosomal subunit protein uS14 of Granulibacter bethesdensis (strain ATCC BAA-1260 / CGDNIH1).